The primary structure comprises 440 residues: Chromosome partition protein MukF (440 aa).

Residues 208 to 236 form a leucine-zipper region; sequence LSETSGTLRELQDTLEAAGDKLQANLLRI.

It belongs to the MukF family. In terms of assembly, interacts, and probably forms a ternary complex, with MukE and MukB via its C-terminal region. The complex formation is stimulated by calcium or magnesium. It is required for an interaction between MukE and MukB.

It localises to the cytoplasm. It is found in the nucleoid. Involved in chromosome condensation, segregation and cell cycle progression. May participate in facilitating chromosome segregation by condensation DNA from both sides of a centrally located replisome during cell division. Not required for mini-F plasmid partitioning. Probably acts via its interaction with MukB and MukE. Overexpression results in anucleate cells. It has a calcium binding activity. The polypeptide is Chromosome partition protein MukF (Edwardsiella ictaluri (strain 93-146)).